We begin with the raw amino-acid sequence, 441 residues long: Fibroleukin (441 aa).

A signal peptide spans 1–15; that stretch reads MKLANWCWLSSTVLA. N25 is a glycosylation site (N-linked (GlcNAc...) asparagine). The stretch at 73–167 forms a coiled coil; that stretch reads SRIEEVFKEV…LEKLNLVNMN (95 aa). The disordered stretch occupies residues 102-128; the sequence is QADDSRDPGRNGLLLPGTGAPGETGDN. 4 N-linked (GlcNAc...) asparagine glycosylation sites follow: N179, N237, N265, and N338. The 233-residue stretch at 206 to 438 folds into the Fibrinogen C-terminal domain; it reads VQQHLIYKDC…EVKMMIRPKH (233 aa).

Homotetramer; disulfide-linked.

The protein localises to the secreted. Its function is as follows. May play a role in physiologic lymphocyte functions at mucosal sites. The sequence is that of Fibroleukin (FGL2) from Bos taurus (Bovine).